We begin with the raw amino-acid sequence, 177 residues long: Ribosome maturation factor RimM (177 aa).

In terms of domain architecture, PRC barrel spans 96-177; sequence DNEFYWVDLI…KITVDWGLDY (82 aa).

This sequence belongs to the RimM family. Binds ribosomal protein uS19.

The protein resides in the cytoplasm. Its function is as follows. An accessory protein needed during the final step in the assembly of 30S ribosomal subunit, possibly for assembly of the head region. Essential for efficient processing of 16S rRNA. May be needed both before and after RbfA during the maturation of 16S rRNA. It has affinity for free ribosomal 30S subunits but not for 70S ribosomes. The protein is Ribosome maturation factor RimM of Herminiimonas arsenicoxydans.